A 353-amino-acid chain; its full sequence is Methylthioribose-1-phosphate isomerase (353 aa).

Substrate is bound by residues 51–53, Arg-94, and Gln-199; that span reads RGA. Residue Asp-240 is the Proton donor of the active site. 250–251 serves as a coordination point for substrate; it reads NK.

This sequence belongs to the EIF-2B alpha/beta/delta subunits family. MtnA subfamily. In terms of assembly, homodimer.

The enzyme catalyses 5-(methylsulfanyl)-alpha-D-ribose 1-phosphate = 5-(methylsulfanyl)-D-ribulose 1-phosphate. The protein operates within amino-acid biosynthesis; L-methionine biosynthesis via salvage pathway; L-methionine from S-methyl-5-thio-alpha-D-ribose 1-phosphate: step 1/6. In terms of biological role, catalyzes the interconversion of methylthioribose-1-phosphate (MTR-1-P) into methylthioribulose-1-phosphate (MTRu-1-P). The protein is Methylthioribose-1-phosphate isomerase of Bacillus cereus (strain ATCC 14579 / DSM 31 / CCUG 7414 / JCM 2152 / NBRC 15305 / NCIMB 9373 / NCTC 2599 / NRRL B-3711).